An 833-amino-acid polypeptide reads, in one-letter code: Homeobox-leucine zipper protein ATHB-8 (833 aa).

Residues 12–75 constitute a DNA-binding region (homeobox); that stretch reads DNGKYVRYTP…NRRCREKQRK (64 aa). Positions 70–108 form a coiled coil; that stretch reads REKQRKEASRLQAVNRKLTAMNKLLMEENDRLQKQVSHL. In terms of domain architecture, START spans 150-378; sequence RDASPAGLLS…ISQEISQPNV (229 aa).

The protein belongs to the HD-ZIP homeobox family. Class III subfamily. Interacts with ESR1 and ESR2. Interacts with ZPR3.

It localises to the nucleus. Probable transcription factor involved in the regulation of vascular development. May promote differentiation of precambial and cambial cells. In Arabidopsis thaliana (Mouse-ear cress), this protein is Homeobox-leucine zipper protein ATHB-8 (ATHB-8).